A 256-amino-acid polypeptide reads, in one-letter code: Floral homeotic protein APETALA 1 (256 aa).

Residues 1-61 (MGRGRVQLKR…GKLFEYSTDP (61 aa)) form the MADS-box domain. A K-box domain is found at 88 to 178 (NTNWSMEYNR…SKQIKERENV (91 aa)). The disordered stretch occupies residues 187-206 (DEQNHGHNMPPPPPPQQHQI).

Homodimer capable of binding to CArG-box sequences.

It localises to the nucleus. In terms of biological role, transcription factor that promotes early floral meristem identity in synergy with LEAFY. Displays a redundant function with CAULIFLOWER in the up-regulation of LEAFY. Required subsequently for the transition of an inflorescence meristem into a floral meristem, and for the normal development of sepals and petals in flowers. Regulates positively B class homeotic proteins. This is Floral homeotic protein APETALA 1 (AP1) from Brassica oleracea (Wild cabbage).